Consider the following 706-residue polypeptide: Polyribonucleotide nucleotidyltransferase (706 aa).

D486 and D492 together coordinate Mg(2+). Residues 553–612 (PRIHTIKISTDKIKDVIGKGGSVIRALTEETGTTIEIEDDGTVKIASTDGEKAKHAIRRI) form the KH domain. In terms of domain architecture, S1 motif spans 622–690 (GRVYQGKVTR…RQGRVRLSIK (69 aa)).

Belongs to the polyribonucleotide nucleotidyltransferase family. In terms of assembly, component of the RNA degradosome, which is a multiprotein complex involved in RNA processing and mRNA degradation. Mg(2+) is required as a cofactor.

The protein localises to the cytoplasm. It carries out the reaction RNA(n+1) + phosphate = RNA(n) + a ribonucleoside 5'-diphosphate. In terms of biological role, involved in mRNA degradation. Catalyzes the phosphorolysis of single-stranded polyribonucleotides processively in the 3'- to 5'-direction. The sequence is that of Polyribonucleotide nucleotidyltransferase from Pectobacterium carotovorum subsp. carotovorum (strain PC1).